The primary structure comprises 409 residues: Small ribosomal subunit protein mS47 (409 aa).

The N-terminal 26 residues, 1–26 (MQTVKALRRVSEPLQWVRSVSYGRRF), are a transit peptide targeting the mitochondrion. Positions 388-409 (ASELDDSDSELKLPTAQREPYF) are disordered.

Belongs to the enoyl-CoA hydratase/isomerase family. Mitochondrion-specific ribosomal protein mS47 subfamily. Component of the mitochondrial ribosome small subunit.

It localises to the mitochondrion. The sequence is that of Small ribosomal subunit protein mS47 from Arabidopsis thaliana (Mouse-ear cress).